We begin with the raw amino-acid sequence, 475 residues long: Ribulose bisphosphate carboxylase large chain (475 aa).

Residues 1-2 (MS) constitute a propeptide that is removed on maturation. An N-acetylproline modification is found at Pro-3. Lys-14 carries the N6,N6,N6-trimethyllysine modification. Asn-123 and Thr-173 together coordinate substrate. The Proton acceptor role is filled by Lys-175. Residue Lys-177 participates in substrate binding. The Mg(2+) site is built by Lys-201, Asp-203, and Glu-204. Lys-201 is modified (N6-carboxylysine). His-294 serves as the catalytic Proton acceptor. Substrate contacts are provided by Arg-295, His-327, and Ser-379.

This sequence belongs to the RuBisCO large chain family. Type I subfamily. In terms of assembly, heterohexadecamer of 8 large chains and 8 small chains; disulfide-linked. The disulfide link is formed within the large subunit homodimers. It depends on Mg(2+) as a cofactor. The disulfide bond which can form in the large chain dimeric partners within the hexadecamer appears to be associated with oxidative stress and protein turnover.

Its subcellular location is the plastid. The protein resides in the chloroplast. The catalysed reaction is 2 (2R)-3-phosphoglycerate + 2 H(+) = D-ribulose 1,5-bisphosphate + CO2 + H2O. It carries out the reaction D-ribulose 1,5-bisphosphate + O2 = 2-phosphoglycolate + (2R)-3-phosphoglycerate + 2 H(+). Functionally, ruBisCO catalyzes two reactions: the carboxylation of D-ribulose 1,5-bisphosphate, the primary event in carbon dioxide fixation, as well as the oxidative fragmentation of the pentose substrate in the photorespiration process. Both reactions occur simultaneously and in competition at the same active site. This is Ribulose bisphosphate carboxylase large chain from Pinus krempfii (Krempf's pine).